A 70-amino-acid chain; its full sequence is Large ribosomal subunit protein eL38 (70 aa).

Lys-4 participates in a covalent cross-link: Glycyl lysine isopeptide (Lys-Gly) (interchain with G-Cter in SUMO2). The residue at position 9 (Lys-9) is an N6-acetyllysine; alternate. A Glycyl lysine isopeptide (Lys-Gly) (interchain with G-Cter in SUMO2); alternate cross-link involves residue Lys-9. Lys-67 is subject to N6-acetyllysine.

It belongs to the eukaryotic ribosomal protein eL38 family. Component of the large ribosomal subunit.

It is found in the cytoplasm. In terms of biological role, component of the large ribosomal subunit. The ribosome is a large ribonucleoprotein complex responsible for the synthesis of proteins in the cell. The chain is Large ribosomal subunit protein eL38 (RPL38) from Macaca fascicularis (Crab-eating macaque).